Here is a 190-residue protein sequence, read N- to C-terminus: ATP synthase subunit b (190 aa).

A helical membrane pass occupies residues 4 to 24; sequence ILAPVLSLVLIAGVASPALAA.

The protein belongs to the ATPase B chain family. F-type ATPases have 2 components, F(1) - the catalytic core - and F(0) - the membrane proton channel. F(1) has five subunits: alpha(3), beta(3), gamma(1), delta(1), epsilon(1). F(0) has three main subunits: a(1), b(2) and c(10-14). The alpha and beta chains form an alternating ring which encloses part of the gamma chain. F(1) is attached to F(0) by a central stalk formed by the gamma and epsilon chains, while a peripheral stalk is formed by the delta and b chains.

Its subcellular location is the cell inner membrane. Its function is as follows. F(1)F(0) ATP synthase produces ATP from ADP in the presence of a proton or sodium gradient. F-type ATPases consist of two structural domains, F(1) containing the extramembraneous catalytic core and F(0) containing the membrane proton channel, linked together by a central stalk and a peripheral stalk. During catalysis, ATP synthesis in the catalytic domain of F(1) is coupled via a rotary mechanism of the central stalk subunits to proton translocation. Functionally, component of the F(0) channel, it forms part of the peripheral stalk, linking F(1) to F(0). The chain is ATP synthase subunit b from Ruegeria pomeroyi (strain ATCC 700808 / DSM 15171 / DSS-3) (Silicibacter pomeroyi).